We begin with the raw amino-acid sequence, 129 residues long: Histone H3 (129 aa).

The interval 1-36 (MSRTKETARAKRTITSKKSKKAPSGASGVKRSHRRW) is disordered. Positions 10–21 (AKRTITSKKSKK) are enriched in basic residues.

The protein belongs to the histone H3 family. As to quaternary structure, the nucleosome is a histone octamer containing two molecules each of H2A, H2B, H3 and H4 assembled in one H3-H4 heterotetramer and two H2A-H2B heterodimers. The octamer wraps approximately 147 bp of DNA.

Its subcellular location is the nucleus. It is found in the chromosome. Core component of nucleosome. Nucleosomes wrap and compact DNA into chromatin, limiting DNA accessibility to the cellular machineries which require DNA as a template. Histones thereby play a central role in transcription regulation, DNA repair, DNA replication and chromosomal stability. DNA accessibility is regulated via a complex set of post-translational modifications of histones, also called histone code, and nucleosome remodeling. This Leishmania infantum protein is Histone H3.